A 130-amino-acid chain; its full sequence is U-scoloptoxin(17)-Er1a (130 aa).

An N-terminal signal peptide occupies residues 1 to 18; it reads MKLLVFALFLQVVQLSLA.

The protein belongs to the scoloptoxin-17 family. Post-translationally, contains 4 disulfide bonds. Expressed by the venom gland.

It is found in the secreted. The protein is U-scoloptoxin(17)-Er1a of Ethmostigmus rubripes (Giant centipede).